The following is a 671-amino-acid chain: DNA ligase (671 aa).

Residues 32 to 36 (DAEYD), 81 to 82 (SL), and Glu113 contribute to the NAD(+) site. Catalysis depends on Lys115, which acts as the N6-AMP-lysine intermediate. Residues Arg136, Glu173, Lys290, and Lys314 each coordinate NAD(+). Positions 408, 411, 426, and 432 each coordinate Zn(2+). In terms of domain architecture, BRCT spans 593 to 671 (EIDSPFAGKT…EAEMIRLLGA (79 aa)).

Belongs to the NAD-dependent DNA ligase family. LigA subfamily. Mg(2+) is required as a cofactor. Requires Mn(2+) as cofactor.

It catalyses the reaction NAD(+) + (deoxyribonucleotide)n-3'-hydroxyl + 5'-phospho-(deoxyribonucleotide)m = (deoxyribonucleotide)n+m + AMP + beta-nicotinamide D-nucleotide.. Its function is as follows. DNA ligase that catalyzes the formation of phosphodiester linkages between 5'-phosphoryl and 3'-hydroxyl groups in double-stranded DNA using NAD as a coenzyme and as the energy source for the reaction. It is essential for DNA replication and repair of damaged DNA. This chain is DNA ligase, found in Salmonella gallinarum (strain 287/91 / NCTC 13346).